The primary structure comprises 114 residues: Probable divalent-cation tolerance protein cutA homolog (114 aa).

This sequence belongs to the CutA family. Homotrimer.

This Encephalitozoon cuniculi (strain GB-M1) (Microsporidian parasite) protein is Probable divalent-cation tolerance protein cutA homolog.